A 265-amino-acid chain; its full sequence is Uroporphyrinogen-III synthase (265 aa).

It belongs to the uroporphyrinogen-III synthase family. In terms of assembly, monomer.

The protein localises to the cytoplasm. Its subcellular location is the cytosol. The catalysed reaction is hydroxymethylbilane = uroporphyrinogen III + H2O. It functions in the pathway porphyrin-containing compound metabolism; protoporphyrin-IX biosynthesis; coproporphyrinogen-III from 5-aminolevulinate: step 3/4. Functionally, catalyzes cyclization of the linear tetrapyrrole, hydroxymethylbilane, to the macrocyclic uroporphyrinogen III, the branch point for the various sub-pathways leading to the wide diversity of porphyrins. Porphyrins act as cofactors for a multitude of enzymes that perform a variety of processes within the cell such as methionine synthesis (vitamin B12) or oxygen transport (heme). The chain is Uroporphyrinogen-III synthase (Uros) from Mus musculus (Mouse).